We begin with the raw amino-acid sequence, 43 residues long: Protein PsbN 1 (43 aa).

Residues 3-23 form a helical membrane-spanning segment; the sequence is TATILGILIAAAVVGITVLAL.

Belongs to the PsbN family.

The protein localises to the cellular thylakoid membrane. Functionally, may play a role in photosystem I and II biogenesis. The protein is Protein PsbN 1 of Microcystis aeruginosa (strain NIES-843 / IAM M-2473).